Reading from the N-terminus, the 1013-residue chain is MFTLKQVINKSIQTSMKNGVMSSAVKRSFSTVGGINQPKSRKELSESFLDGTSSTYVEDMFANWVKDPKSVHPSWASFFESSERGVPAGEAFMSPPTLGSSVATKATPSTYTSSGSPKQVSDSMRLLLLVRAYQVRGHALANLDPLGLEVKEEPAEFNPAKYGFTEADMDRPIFVGEGFISGFLTNKQPETTLRQVLKRLKETYCGDIGIEYMHIQDREMCDWIRDKFETSQPVEIPDKEKIKILERLSWADQFEGFLGLKYRATRRFGLDGCESLIPGMKAMIDTATEDGVESIVLGMPHRGRLNVLANVVRKPLPAIFNEFNGGVISIEGEYSATGDVKYHLGTSYDRVTSSGKKVHLSLVANPSHLEAVNPLVEGKVRAKQHYSKDTEQKKSMAVQLHGDASVAGQGVVYETLHLSNLDNYSTGGTVHIVVNNQIGFTTNPKYSRSSKYCTDVAKTIDIPVFHVNGDNVEAVVKVCKIAAEWRQKFKRDVFVDIVCYRKHGHNETDQPKFTQPIMYDKIGKQQPIIEKYSNKLIAEKVITQEQYLQMKNIIHESYEKGYQDGMKHVPNAEDWLESRWEGFKSPIELGNPGRTGIDQDLLQKIGKVLYTEPSGFEVHSTIKRLLKEKKDMFDKGTGFDWATAEALAFGSLLLDGNHVRLSGQDVERGTFSHRHAVWHDQKTDQTYAPLTKLATALGKKDAAEFVASNSSLSEFAVLGFELGYSLENPDALILWEAQFGDFSNGAQVIIDQFISSGEQKWMRQSGLTMLLPHGYDGAGPEHSSCRIERYLQLCDSDPNKIPPKEEAERKQSQHCNMQVLNCSTPVNYFHALRRQVHRDFRKPLVIATPKYLLRYEKSFSTAKEFSNDSFTRLYPEAFPDQINKPEKINRIVFCTGQVYYNLIASRESNNIKDVAIIRVEQLHPFPFDLVAEQLQHYPNAKAIWCQEEPMNMGYWNYIYPYFISTFKHINRPADITYTGRPSSASPAVASHTLHKLQLENFLSNALTGQVGSK.

The N-terminal 39 residues, 1-39 (MFTLKQVINKSIQTSMKNGVMSSAVKRSFSTVGGINQPK), are a transit peptide targeting the mitochondrion. 5 residues coordinate thiamine diphosphate: Arg302, Asp403, Asn436, Ile438, and Gln664. 3 residues coordinate Mg(2+): Asp403, Asn436, and Ile438.

This sequence belongs to the alpha-ketoglutarate dehydrogenase family. As to quaternary structure, homodimer. Component of the 2-oxoglutarate dehydrogenase complex. The cofactor is thiamine diphosphate. It depends on Mg(2+) as a cofactor.

It localises to the mitochondrion matrix. It carries out the reaction N(6)-[(R)-lipoyl]-L-lysyl-[protein] + 2-oxoglutarate + H(+) = N(6)-[(R)-S(8)-succinyldihydrolipoyl]-L-lysyl-[protein] + CO2. Functionally, the 2-oxoglutarate dehydrogenase complex catalyzes the overall conversion of 2-oxoglutarate to succinyl-CoA and CO(2). It contains multiple copies of three enzymatic components: 2-oxoglutarate dehydrogenase (E1), dihydrolipoamide succinyltransferase (E2) and lipoamide dehydrogenase (E3). This chain is 2-oxoglutarate dehydrogenase, mitochondrial (ogdh), found in Dictyostelium discoideum (Social amoeba).